A 151-amino-acid chain; its full sequence is Mitochondrial intermembrane space import and assembly protein 40 homolog (151 aa).

Positions Met1 to Ser35 are disordered. Positions Gln7 to Ser26 are enriched in low complexity. Cystine bridges form between Cys65–Cys67, Cys76–Cys109, and Cys86–Cys99. The 45-residue stretch at Asn73–Phe117 folds into the CHCH domain. 2 short sequence motifs (cx9C motif) span residues Cys76–Cys86 and Cys99–Cys109. The tract at residues Glu123–Leu151 is disordered.

It is found in the mitochondrion intermembrane space. Its subcellular location is the peroxisome matrix. Its function is as follows. Required for the import and folding of small cysteine-containing proteins in the mitochondrial intermembrane space. The sequence is that of Mitochondrial intermembrane space import and assembly protein 40 homolog from Oryza sativa subsp. japonica (Rice).